We begin with the raw amino-acid sequence, 161 residues long: Ribonuclease H (161 aa).

The RNase H type-1 domain maps to 2-141; it reads TNNEIIAATD…ADSLARQAAN (140 aa). The Mg(2+) site is built by Asp-11, Glu-46, Asp-69, and Asp-133.

This sequence belongs to the RNase H family. Monomer. The cofactor is Mg(2+).

The protein resides in the cytoplasm. It carries out the reaction Endonucleolytic cleavage to 5'-phosphomonoester.. Endonuclease that specifically degrades the RNA of RNA-DNA hybrids. The sequence is that of Ribonuclease H from Tropheryma whipplei (strain TW08/27) (Whipple's bacillus).